A 274-amino-acid chain; its full sequence is Putative pyruvate, phosphate dikinase regulatory protein (274 aa).

An ADP-binding site is contributed by 153-160 (GISRTSKT).

Belongs to the pyruvate, phosphate/water dikinase regulatory protein family. PDRP subfamily.

It catalyses the reaction N(tele)-phospho-L-histidyl/L-threonyl-[pyruvate, phosphate dikinase] + ADP = N(tele)-phospho-L-histidyl/O-phospho-L-threonyl-[pyruvate, phosphate dikinase] + AMP + H(+). The catalysed reaction is N(tele)-phospho-L-histidyl/O-phospho-L-threonyl-[pyruvate, phosphate dikinase] + phosphate + H(+) = N(tele)-phospho-L-histidyl/L-threonyl-[pyruvate, phosphate dikinase] + diphosphate. Functionally, bifunctional serine/threonine kinase and phosphorylase involved in the regulation of the pyruvate, phosphate dikinase (PPDK) by catalyzing its phosphorylation/dephosphorylation. The chain is Putative pyruvate, phosphate dikinase regulatory protein from Bartonella henselae (strain ATCC 49882 / DSM 28221 / CCUG 30454 / Houston 1) (Rochalimaea henselae).